A 596-amino-acid chain; its full sequence is Arrestin domain-containing protein C31A2.12 (596 aa).

Residues 194-211 (AYAIGSYIPIHFVLVPLL) traverse the membrane as a helical segment. 2 disordered regions span residues 363–387 (NLDT…TYAS) and 405–446 (QQQP…VITR). Thr373 and Thr374 each carry phosphothreonine. Composition is skewed to polar residues over residues 405–420 (QQQP…SPSN) and 430–446 (SLGS…VITR). 4 positions are modified to phosphoserine: Ser452, Ser474, Ser493, and Ser497. A disordered region spans residues 493-596 (SRPPSPGIVT…MLPSGFSRRN (104 aa)). Residues Thr502 and Thr507 each carry the phosphothreonine modification. Polar residues predominate over residues 504–522 (PQRTSPSFFVSPTESTRQS). The residue at position 514 (Ser514) is a Phosphoserine. Over residues 531-555 (HSTSSSSGISPSHSSASLAHLSQAS) the composition is skewed to low complexity.

The protein belongs to the arrestin family.

The protein resides in the membrane. The protein is Arrestin domain-containing protein C31A2.12 of Schizosaccharomyces pombe (strain 972 / ATCC 24843) (Fission yeast).